Consider the following 485-residue polypeptide: Iroquois-class homeodomain protein IRX-4 (485 aa).

A DNA-binding region (homeobox; TALE-type) is located at residues 142-203; sequence GTRRKNATRE…NARRRLKKEN (62 aa). The disordered stretch occupies residues 206–313; that stretch reads TWPPRNKCSD…EEEEAAERAR (108 aa). Positions 221–232 are enriched in acidic residues; sequence EEEEEEEEECSQ. The span at 234-253 shows a compositional bias: basic and acidic residues; that stretch reads DAMKSEKAEEPTGKEEKELE. Acidic residues predominate over residues 254 to 269; it reads LSDLEDLDAAESESSE. The span at 282–294 shows a compositional bias: pro residues; the sequence is HPLPGGGPPPRAA.

It belongs to the TALE/IRO homeobox family. In terms of tissue distribution, ventricles of the heart, developing feather buds, retina, hindbrain.

The protein localises to the nucleus. Regulates the chamber-specific expression of myosin isoforms by activating the expression of the ventricle myosin heavy chain-1 (Vmhc1) and suppressing the expression of the atrial myosin heavy chain-1 (Amhc1) in the ventricles. May play a critical role in establishing chamber-specific gene expression in the developing heart. In Gallus gallus (Chicken), this protein is Iroquois-class homeodomain protein IRX-4 (IRX4).